Consider the following 242-residue polypeptide: DNA-directed RNA polymerase III subunit rpc5 (242 aa).

Disordered regions lie at residues 1–22 (MSFS…TEEQ) and 153–172 (LKAA…PRGP). The span at 155–172 (AAAGPSNSSSGTSTPRGP) shows a compositional bias: low complexity.

In terms of assembly, component of the RNA polymerase III (Pol III) complex consisting of 17 subunits.

Its subcellular location is the cytoplasm. The protein resides in the nucleus. Its function is as follows. DNA-dependent RNA polymerase catalyzes the transcription of DNA into RNA using the four ribonucleoside triphosphates as substrates. Specific peripheric component of RNA polymerase III which synthesizes small RNAs, such as 5S rRNA and tRNAs. The RPC53/RPC4-RPC37/RPC5 subcomplex is required for terminator recognition and reinitiation. In Schizosaccharomyces pombe (strain 972 / ATCC 24843) (Fission yeast), this protein is DNA-directed RNA polymerase III subunit rpc5 (rpc37).